A 481-amino-acid polypeptide reads, in one-letter code: Hyaluronidase-4 (481 aa).

At 1–11 the chain is on the cytoplasmic side; it reads MQLLPEGQLRL. Residues 12–32 form a helical membrane-spanning segment; that stretch reads CVFQPVHLTSGLLILFILKSI. Topologically, residues 33–455 are extracellular; it reads SSLKPARLPV…CREMTEASGP (423 aa). Intrachain disulfides connect cysteine 59-cysteine 351, cysteine 223-cysteine 237, cysteine 376-cysteine 387, cysteine 381-cysteine 435, and cysteine 437-cysteine 446. N-linked (GlcNAc...) asparagine glycans are attached at residues asparagine 64 and asparagine 115. Catalysis depends on glutamate 147, which acts as the Proton donor. N-linked (GlcNAc...) asparagine glycans are attached at residues asparagine 232 and asparagine 343. The chain crosses the membrane as a helical span at residues 456–476; the sequence is SGLSLSSSSVITLCLLVLAGY. Topologically, residues 477-481 are cytoplasmic; the sequence is QSIQL.

It belongs to the glycosyl hydrolase 56 family.

The protein localises to the membrane. It catalyses the reaction Random hydrolysis of (1-&gt;4)-linkages between N-acetyl-beta-D-glucosamine and D-glucuronate residues in hyaluronate.. Functionally, endo-hyaluronidase that degrades hyaluronan to smaller oligosaccharide fragments. Also has chondroitin sulfate hydrolase activity, The best substrate being the galactosaminidic linkage in the sequence of a trisulfated tetrasaccharide. In Mus musculus (Mouse), this protein is Hyaluronidase-4 (Hyal4).